The following is an 85-amino-acid chain: Small ribosomal subunit protein uS17 (85 aa).

Belongs to the universal ribosomal protein uS17 family. As to quaternary structure, part of the 30S ribosomal subunit.

Its function is as follows. One of the primary rRNA binding proteins, it binds specifically to the 5'-end of 16S ribosomal RNA. The sequence is that of Small ribosomal subunit protein uS17 from Trichlorobacter lovleyi (strain ATCC BAA-1151 / DSM 17278 / SZ) (Geobacter lovleyi).